An 882-amino-acid polypeptide reads, in one-letter code: DNA mismatch repair protein MutS (882 aa).

626-633 contributes to the ATP binding site; the sequence is GPNMAGKS.

It belongs to the DNA mismatch repair MutS family.

In terms of biological role, this protein is involved in the repair of mismatches in DNA. It is possible that it carries out the mismatch recognition step. This protein has a weak ATPase activity. The sequence is that of DNA mismatch repair protein MutS from Anaeromyxobacter sp. (strain Fw109-5).